The following is a 359-amino-acid chain: MDDQDPGGISPLQQMVASGAGAVVTSLFMTPLDVVKVRLQSQRPTVASELTTPSRFWSLSYTKSPSTLQSPGKCLLYCNGVLEPLYLCPNGTRCATWFQDPTRFTGTLDAFVKIVRHEGTRTLWSGLPATLVMTVPATAIYFTAYDQLKAFLCGQSLTSDLYAPMVAGALARMGTVTVVSPLELVRTKLQAQHVSYRELAACVQAAVAQGGWRSLWLGWGPTALRDVPFSALYWFNYELVKSQLNGPRQKEQTSVGISFVAGGISGMVAATLTLPFDVVKTQRQMSLGAVEAMRVKPPRVDSTWLLLRRIQAESGTRGLFAGFLPRIIKAAPSCAIMISTYEFGKSFFHRLNQEQPLGH.

The Mitochondrial intermembrane segment spans residues 1–14; sequence MDDQDPGGISPLQQ. Solcar repeat units follow at residues 9–151, 159–243, and 253–347; these read ISPL…LKAF, SDLY…VKSQ, and TSVG…GKSF. A helical transmembrane segment spans residues 15–35; it reads MVASGAGAVVTSLFMTPLDVV. Residues 36–121 are Mitochondrial matrix-facing; sequence KVRLQSQRPT…VKIVRHEGTR (86 aa). [2Fe-2S] cluster-binding residues include cysteine 74, cysteine 78, cysteine 88, and cysteine 94. A helical membrane pass occupies residues 122-142; it reads TLWSGLPATLVMTVPATAIYF. The Mitochondrial intermembrane segment spans residues 143-164; sequence TAYDQLKAFLCGQSLTSDLYAP. A helical transmembrane segment spans residues 165 to 185; sequence MVAGALARMGTVTVVSPLELV. Over 186–214 the chain is Mitochondrial matrix; that stretch reads RTKLQAQHVSYRELAACVQAAVAQGGWRS. The chain crosses the membrane as a helical span at residues 215 to 235; that stretch reads LWLGWGPTALRDVPFSALYWF. Topologically, residues 236–255 are mitochondrial intermembrane; the sequence is NYELVKSQLNGPRQKEQTSV. The chain crosses the membrane as a helical span at residues 256–276; it reads GISFVAGGISGMVAATLTLPF. Residues 277 to 317 lie on the Mitochondrial matrix side of the membrane; the sequence is DVVKTQRQMSLGAVEAMRVKPPRVDSTWLLLRRIQAESGTR. Residues 318 to 338 form a helical membrane-spanning segment; sequence GLFAGFLPRIIKAAPSCAIMI. The Mitochondrial intermembrane portion of the chain corresponds to 339 to 359; sequence STYEFGKSFFHRLNQEQPLGH.

The protein belongs to the mitochondrial carrier (TC 2.A.29) family. In terms of processing, cleaved and degraded by AFG3L2; degradation by AFG3L2 is regulated by the ability of SLC25A39 to bind iron-sulfur. In absence of mitochondrial glutathione, SLC25A39 binds iron-sulfur, preventing cleavage and degradation by AFG3L2. The presence of mitochondrial glutathione prevents iron-sulfur-binding to SLC25A39, promoting cleavage and degradation by AFG3L2.

The protein resides in the mitochondrion inner membrane. The catalysed reaction is glutathione(in) = glutathione(out). With respect to regulation, the activity of SLC25A39 is regulated by levels of mitochondrial glutathione via its ability to bind [2Fe-2S] iron-sulfur cluster. Upon physiological levels of mitochondrial glutathione, glutathione prevents iron-sulfur-binding to SLC25A39 promoting cleavage and degradation by AFG3L2. Upon depletion of mitochondrial glutathione, SLC25A39 binds iron-sulfur, preventing cleavage and degradation by AFG3L2. Mitochondrial transporter required for glutathione import into mitochondria. Glutathione, which plays key roles in oxidative metabolism, is produced exclusively in the cytosol and is imported in many organelles. Mitochondrial glutathione is required for the activity and stability of proteins containing iron-sulfur clusters, as well as erythropoiesis. This is Mitochondrial glutathione transporter SLC25A39 (Slc25a39) from Rattus norvegicus (Rat).